A 342-amino-acid polypeptide reads, in one-letter code: N-acetyl-gamma-glutamyl-phosphate reductase (342 aa).

Residue cysteine 149 is part of the active site.

Belongs to the NAGSA dehydrogenase family. Type 1 subfamily.

Its subcellular location is the cytoplasm. The catalysed reaction is N-acetyl-L-glutamate 5-semialdehyde + phosphate + NADP(+) = N-acetyl-L-glutamyl 5-phosphate + NADPH + H(+). It functions in the pathway amino-acid biosynthesis; L-arginine biosynthesis; N(2)-acetyl-L-ornithine from L-glutamate: step 3/4. Functionally, catalyzes the NADPH-dependent reduction of N-acetyl-5-glutamyl phosphate to yield N-acetyl-L-glutamate 5-semialdehyde. This is N-acetyl-gamma-glutamyl-phosphate reductase from Cereibacter sphaeroides (strain KD131 / KCTC 12085) (Rhodobacter sphaeroides).